The primary structure comprises 2844 residues: Sodium channel protein 60E (2844 aa).

Residues 1-121 (MSDDQATFND…WSPARRVCVY (121 aa)) are Cytoplasmic-facing. The stretch at 107 to 434 (FLFYPWSPAR…FDPSVLNVKK (328 aa)) is one I repeat. The chain crosses the membrane as a helical span at residues 122–145 (IATNQFFDYCVMATILFNCIFLAM). Over 146-151 (TETVEE) the chain is Extracellular. Residues 152–172 (AEYIFLAIYSIEMVIKIIAKG) form a helical membrane-spanning segment. Residues 173–183 (FLLNKYTYLRN) lie on the Cytoplasmic side of the membrane. A helical membrane pass occupies residues 184–202 (PWNWLDFVVITSGYATIGM). The Extracellular portion of the chain corresponds to 203–208 (EVGNLA). A helical; Voltage-sensor membrane pass occupies residues 209 to 228 (GLRTFRVLRALKTVSIMPGL). Residues 229 to 244 (KTIINALLHSFRQLAE) lie on the Cytoplasmic side of the membrane. Residues 245–265 (VMTLTIFCLMVFALFALQVYM) form a helical membrane-spanning segment. Over 266 to 340 (GELRNKCVRQ…PNHGYTNFDN (75 aa)) the chain is Extracellular. A disulfide bridge links Cys-272 with Cys-318. N-linked (GlcNAc...) asparagine glycans are attached at residues Asn-282, Asn-293, and Asn-311. Positions 341 to 365 (FMWSMLTTFQLITLDYWENVYNMVL) form an intramembrane region, pore-forming. At 366–374 (ATCGPMSVS) the chain is on the extracellular side. Residues 375–395 (FFTVVVFFGSFYLINLMLAVV) form a helical membrane-spanning segment. Topologically, residues 396 to 687 (ALSYEEEAEI…QNCLYKVVRD (292 aa)) are cytoplasmic. The segment at 452-610 (ASYSKKKTRR…QDTTNDMGHV (159 aa)) is disordered. Over residues 455–465 (SKKKTRRKKTK) the composition is skewed to basic residues. The span at 469-479 (EGGTNGNGNGS) shows a compositional bias: gly residues. Composition is skewed to low complexity over residues 511 to 520 (QAQKQYQQME) and 577 to 586 (SSNSSGVNRE). The span at 593-603 (GVVDDHEEQDT) shows a compositional bias: acidic residues. The II repeat unit spans residues 668–1130 (CTDYESWLQF…ESIELLGQYN (463 aa)). Residues 688 to 708 (PLFELAITLCIVLNTAFLAME) form a helical membrane-spanning segment. Residues 709–718 (HHGMSESFRN) lie on the Extracellular side of the membrane. The chain crosses the membrane as a helical span at residues 719-743 (ALDVGNKVFTSIFTFECIVKLMALS). Residues 744–749 (KDFFLC) lie on the Cytoplasmic side of the membrane. The helical transmembrane segment at 750-769 (GWNIFDLLIVTASLLDIIFE) threads the bilayer. At 770 to 775 (LVDGLS) the chain is on the extracellular side. The helical; Voltage-sensor transmembrane segment at 776–795 (VLRGLRLLRVLKLAQSWTTM) threads the bilayer. Residues 796–810 (KVLLSIIISTIGALG) lie on the Cytoplasmic side of the membrane. The chain crosses the membrane as a helical span at residues 811–832 (NLTLILVIVIYIFAVIGMQLFS). Residues 833–852 (KDYTPEKFDPDPVPRWNFND) lie on the Extracellular side of the membrane. Residues 853-873 (FFHSFMMIFRILCGEWIEPLW) constitute an intramembrane region (pore-forming). The Extracellular portion of the chain corresponds to 874–889 (DCMRAEEEQGASTCFA). A disulfide bridge links Cys-875 with Cys-887. A helical transmembrane segment spans residues 890–910 (IFLPTLVMGNFMVLNLFLALL). At 911-1742 (LNSFNSEELK…SAKHWTRVRT (832 aa)) the chain is on the cytoplasmic side. Residues 1129-1157 (YNSTDTDPYANDQRSGCGSFNRGDSLQDN) are compositionally biased toward polar residues. Disordered regions lie at residues 1129 to 1166 (YNST…GSEE), 1185 to 1224 (YRKS…NSMS), 1268 to 1288 (ISNV…ENET), 1577 to 1630 (APTP…ADAS), and 1635 to 1654 (LAMA…ATQK). Low complexity predominate over residues 1191–1203 (RLSQSSGQSQRSL). Basic and acidic residues predominate over residues 1204 to 1213 (LKSEEAEMRR). Composition is skewed to polar residues over residues 1277-1286 (PSSQMGQPEN), 1604-1618 (PQST…QSAR), and 1640-1654 (KTEQ…ATQK). The stretch at 1723-2040 (PWFMSCMDTQ…QKHYYTAMKK (318 aa)) is one III repeat. Residues 1743–1763 (AVLTVVDTPAFEWFVLVLIFA) form a helical membrane-spanning segment. Topologically, residues 1764-1789 (SSITLCFEDINLDKNKTLKRVLYWIN) are extracellular. N-linked (GlcNAc...) asparagine glycosylation is found at Asn-1778 and Asn-1789. A helical membrane pass occupies residues 1790–1810 (FSFCLIFVVEMILKWLALGFS). At 1811 to 1813 (KYF) the chain is on the cytoplasmic side. The helical transmembrane segment at 1814–1834 (TSFWTILDFIIVFVSVFSLLI) threads the bilayer. At 1835 to 1839 (EENEN) the chain is on the extracellular side. The helical; Voltage-sensor transmembrane segment at 1840-1861 (LKVLRSLRTLRALRPLRAISRW) threads the bilayer. Residues 1862 to 1880 (QGMRIVVNALMYAIPSIFN) lie on the Cytoplasmic side of the membrane. A helical transmembrane segment spans residues 1881–1902 (VLLVCLVFWLIFSIMGVQFFGG). Topologically, residues 1903 to 1943 (KFFKCVNEMGELLPITEVNDKWDCIEQNYTWINSKITFDHV) are extracellular. An N-linked (GlcNAc...) asparagine glycan is attached at Asn-1930. An intramembrane region (pore-forming) is located at residues 1944 to 1965 (GMGYLALLQVATFEGWMEVMAD). The Extracellular segment spans residues 1966-1981 (AVDARGVDLQPQREAN). Residues 1982-2002 (LYAYIYFVIFIVCGSFFTLNL) traverse the membrane as a helical segment. The Cytoplasmic portion of the chain corresponds to 2003–2069 (FIGVIIDNFN…MFYDLSNSRR (67 aa)). One copy of the IV repeat lies at 2050-2311 (IKRPINHFLA…NMYIAIILEN (262 aa)). The helical transmembrane segment at 2070-2090 (FEIAIFVLIFLNMLTMGIEHY) threads the bilayer. At 2091–2095 (DQPHA) the chain is on the extracellular side. Residues 2096–2116 (VFFILEVSNAFFTTVFGLEAI) form a helical membrane-spanning segment. The Cytoplasmic segment spans residues 2117 to 2132 (VKIVGLRYHYFTVPWN). The chain crosses the membrane as a helical span at residues 2133 to 2153 (VFDFLLVLASIFGILMEDIMI). The Extracellular segment spans residues 2154–2162 (DLPISPTLL). A helical; Voltage-sensor transmembrane segment spans residues 2163 to 2184 (RVVRVFRIGRILRLIKAAKGIR). Over 2185-2199 (KLLFALVVSLPALFN) the chain is Cytoplasmic. A helical membrane pass occupies residues 2200–2220 (IGALLGLITFIYAILGMSLFG). Residues 2221–2236 (NVKLQGALDDMVNFQT) are Extracellular-facing. The pore-forming intramembrane region spans 2237-2259 (FGRSMQLLFRLMTSAGWNDVLES). Residues 2260 to 2288 (LMIQPPDCDPFIHGHTNGNCGHPLLAITY) are Extracellular-facing. A helical transmembrane segment spans residues 2289–2309 (FTSFIIISYMIVINMYIAIIL). The Cytoplasmic segment spans residues 2310-2844 (ENFNQAHQEE…QFESLPDRQR (535 aa)). The region spanning 2441 to 2470 (QEKAAKTIQTGWKEYLRRKREKERSNSGDS) is the IQ domain. 4 disordered regions span residues 2457–2479 (RRKR…SPGG), 2584–2668 (SLTS…LSAQ), 2780–2802 (DSPK…GAPI), and 2818–2844 (NPEK…DRQR). A compositionally biased stretch (polar residues) spans 2467–2479 (SGDSATQTSSPGG). Residues 2595-2632 (AMNNTTNTTSNSASTSGTASSTATAPATGCGPAATSAS) show a composition bias toward low complexity. Residues 2647–2658 (SRKRASSFIRKK) are compositionally biased toward basic residues. A compositionally biased stretch (polar residues) spans 2825-2836 (DQGNGQDETAQF).

It belongs to the sodium channel (TC 1.A.1.10) family. NaCP60E subfamily. In embryonic and larval stages, expression is limited to very few non-neuronal cells in either the CNS or PNS. In pupal and adult stages, expressed in cell bodies of the fly central nervous system, including optic lobes, central brain, subesophageal ganglion, thoracico-abdominal ganglion, major olfactory organs, the third antennal segment and the maxillary palps.

It is found in the cell membrane. Functionally, mediates the voltage-dependent sodium ion permeability of excitable membranes. Plays a role in processing of olfactory information during the olfactory avoidance response. The polypeptide is Sodium channel protein 60E (NaCP60E) (Drosophila melanogaster (Fruit fly)).